The chain runs to 529 residues: MTLSPYLQEVAKRRTFAIISHPDAGKTTITEKVLLFGQAIQTAGTVKGRGSNQHAKSDWMEMEKQRGISITTSVMQFPYHDCLVNLLDTPGHEDFSEDTYRTLTAVDCCLMVIDAAKGVEDRTRKLMEVTRLRDTPILTFMNKLDRDIRDPMELLDEVENELKIGCAPITWPIGCGKLFKGVYHLYKDETYLYQSGKGHTIQEVRIVKGLNNPDLDAAVGEDLAQQLRDELELVKGASNEFDKELFLAGEITPVFFGTALGNFGVDHMLDGLVEWAPAPMPRQTDTRTVEASEDKFTGFVFKIQANMDPKHRDRVAFMRVVSGKYEKGMKLRQVRTAKDVVISDALTFMAGDRSHVEEAYPGDILGLHNHGTIQIGDTFTQGEMMKFTGIPNFAPELFRRIRLKDPLKQKQLLKGLVQLSEEGAVQVFRPISNNDLIVGAVGVLQFDVVVSRLKSEYSVEAVYESVNVATARWVECADAKKFEEFKRKNESQLALDGGDNLAYIATSMVNLRLAQERYPDVQFHQTREH.

The tr-type G domain occupies 11-280; that stretch reads AKRRTFAIIS…GLVEWAPAPM (270 aa). GTP-binding positions include 20–27, 88–92, and 142–145; these read SHPDAGKT, DTPGH, and NKLD.

It belongs to the TRAFAC class translation factor GTPase superfamily. Classic translation factor GTPase family. PrfC subfamily.

It is found in the cytoplasm. Functionally, increases the formation of ribosomal termination complexes and stimulates activities of RF-1 and RF-2. It binds guanine nucleotides and has strong preference for UGA stop codons. It may interact directly with the ribosome. The stimulation of RF-1 and RF-2 is significantly reduced by GTP and GDP, but not by GMP. This chain is Peptide chain release factor 3, found in Shigella sonnei (strain Ss046).